The sequence spans 408 residues: G2/mitotic-specific cyclin-B (408 aa).

The protein belongs to the cyclin family. Cyclin AB subfamily. In terms of assembly, interacts with the CDC2 protein kinase to form a serine/threonine kinase holoenzyme complex also known as maturation promoting factor (MPF). The cyclin subunit imparts substrate specificity to the complex.

In terms of biological role, essential for the control of the cell cycle at the G2/M (mitosis) transition. This is G2/mitotic-specific cyclin-B from Patella vulgata (Common limpet).